A 125-amino-acid chain; its full sequence is Small ribosomal subunit protein uS13 (125 aa).

The protein belongs to the universal ribosomal protein uS13 family. Part of the 30S ribosomal subunit. Forms a loose heterodimer with protein S19. Forms two bridges to the 50S subunit in the 70S ribosome.

Located at the top of the head of the 30S subunit, it contacts several helices of the 16S rRNA. In the 70S ribosome it contacts the 23S rRNA (bridge B1a) and protein L5 of the 50S subunit (bridge B1b), connecting the 2 subunits; these bridges are implicated in subunit movement. Contacts the tRNAs in the A and P-sites. This Gluconobacter oxydans (strain 621H) (Gluconobacter suboxydans) protein is Small ribosomal subunit protein uS13.